The sequence spans 116 residues: Large ribosomal subunit protein bL17 (116 aa).

This sequence belongs to the bacterial ribosomal protein bL17 family. In terms of assembly, part of the 50S ribosomal subunit. Contacts protein L32.

The sequence is that of Large ribosomal subunit protein bL17 from Parasynechococcus marenigrum (strain WH8102).